Reading from the N-terminus, the 419-residue chain is Multifunctional CCA protein (419 aa).

2 residues coordinate ATP: Gly8 and Arg11. Positions 8 and 11 each coordinate CTP. Mg(2+) is bound by residues Asp21 and Asp23. Residues Arg91, Arg137, and Arg140 each coordinate ATP. Residues Arg91, Arg137, and Arg140 each coordinate CTP. In terms of domain architecture, HD spans 228 to 334; that stretch reads SFLHTMLVLQ…IKLFNKLDVW (107 aa).

It belongs to the tRNA nucleotidyltransferase/poly(A) polymerase family. Bacterial CCA-adding enzyme type 1 subfamily. In terms of assembly, monomer. Can also form homodimers and oligomers. Requires Mg(2+) as cofactor. Ni(2+) is required as a cofactor.

The catalysed reaction is a tRNA precursor + 2 CTP + ATP = a tRNA with a 3' CCA end + 3 diphosphate. It carries out the reaction a tRNA with a 3' CCA end + 2 CTP + ATP = a tRNA with a 3' CCACCA end + 3 diphosphate. Functionally, catalyzes the addition and repair of the essential 3'-terminal CCA sequence in tRNAs without using a nucleic acid template. Adds these three nucleotides in the order of C, C, and A to the tRNA nucleotide-73, using CTP and ATP as substrates and producing inorganic pyrophosphate. tRNA 3'-terminal CCA addition is required both for tRNA processing and repair. Also involved in tRNA surveillance by mediating tandem CCA addition to generate a CCACCA at the 3' terminus of unstable tRNAs. While stable tRNAs receive only 3'-terminal CCA, unstable tRNAs are marked with CCACCA and rapidly degraded. The polypeptide is Multifunctional CCA protein (Mannheimia succiniciproducens (strain KCTC 0769BP / MBEL55E)).